Here is a 318-residue protein sequence, read N- to C-terminus: Galactose-1-phosphate uridylyltransferase (318 aa).

Cys-32, Cys-35, and His-90 together coordinate Zn(2+). A UDP-alpha-D-glucose-binding site is contributed by Asn-130. A Zn(2+)-binding site is contributed by His-141. His-143 functions as the Tele-UMP-histidine intermediate in the catalytic mechanism. Gln-145 contacts UDP-alpha-D-glucose.

The protein belongs to the galactose-1-phosphate uridylyltransferase type 1 family. Zn(2+) is required as a cofactor.

The enzyme catalyses alpha-D-galactose 1-phosphate + UDP-alpha-D-glucose = alpha-D-glucose 1-phosphate + UDP-alpha-D-galactose. The protein operates within carbohydrate metabolism; galactose metabolism. The chain is Galactose-1-phosphate uridylyltransferase (galT) from Thermotoga maritima (strain ATCC 43589 / DSM 3109 / JCM 10099 / NBRC 100826 / MSB8).